Here is a 375-residue protein sequence, read N- to C-terminus: Chaperone protein DnaJ (375 aa).

The J domain maps to 5 to 70; the sequence is DYYEVLGVER…GKRMAYDQYG (66 aa). A CR-type zinc finger spans residues 134–212; sequence GTTVTIRVPT…CHGQGRVEEH (79 aa). Cys-147, Cys-150, Cys-164, Cys-167, Cys-186, Cys-189, Cys-200, and Cys-203 together coordinate Zn(2+). 4 CXXCXGXG motif repeats span residues 147–154, 164–171, 186–193, and 200–207; these read CKTCDGSG, CTTCGGIG, CPRCHGSG, and CPDCHGQG.

Belongs to the DnaJ family. As to quaternary structure, homodimer. The cofactor is Zn(2+).

The protein resides in the cytoplasm. In terms of biological role, participates actively in the response to hyperosmotic and heat shock by preventing the aggregation of stress-denatured proteins and by disaggregating proteins, also in an autonomous, DnaK-independent fashion. Unfolded proteins bind initially to DnaJ; upon interaction with the DnaJ-bound protein, DnaK hydrolyzes its bound ATP, resulting in the formation of a stable complex. GrpE releases ADP from DnaK; ATP binding to DnaK triggers the release of the substrate protein, thus completing the reaction cycle. Several rounds of ATP-dependent interactions between DnaJ, DnaK and GrpE are required for fully efficient folding. Also involved, together with DnaK and GrpE, in the DNA replication of plasmids through activation of initiation proteins. This chain is Chaperone protein DnaJ, found in Azotobacter vinelandii (strain DJ / ATCC BAA-1303).